The following is a 246-amino-acid chain: Proteasome subunit alpha type-6 (246 aa).

Belongs to the peptidase T1A family. In terms of assembly, the 26S proteasome consists of a 20S proteasome core and two 19S regulatory subunits. The 20S proteasome core is composed of 28 subunits that are arranged in four stacked rings, resulting in a barrel-shaped structure. The two end rings are each formed by seven alpha subunits, and the two central rings are each formed by seven beta subunits. The catalytic chamber with the active sites is on the inside of the barrel.

It is found in the cytoplasm. It localises to the nucleus. Its function is as follows. The proteasome is a multicatalytic proteinase complex which is characterized by its ability to cleave peptides with Arg, Phe, Tyr, Leu, and Glu adjacent to the leaving group at neutral or slightly basic pH. The proteasome has an ATP-dependent proteolytic activity. The polypeptide is Proteasome subunit alpha type-6 (PAA1) (Nicotiana tabacum (Common tobacco)).